The chain runs to 373 residues: Integrator complex subunit 15 (373 aa).

The protein belongs to the Integrator subunit 15 family. In terms of assembly, belongs to the multiprotein complex Integrator, at least composed of IntS1, IntS2, IntS3, IntS4, omd/IntS5, IntS6, defl/IntS7, IntS8, IntS9, IntS10, IntS11, IntS12, asun/IntS13, IntS14 and IntS15. The core complex associates with protein phosphatase 2A subunits mts/PP2A and Pp2A-29B, to form the Integrator-PP2A (INTAC) complex.

Its subcellular location is the nucleus. Its function is as follows. Component of the integrator complex, a multiprotein complex that terminates RNA polymerase II (Pol II) transcription in the promoter-proximal region of genes. The integrator complex provides a quality checkpoint during transcription elongation by driving premature transcription termination of transcripts that are unfavorably configured for transcriptional elongation: the complex terminates transcription by (1) catalyzing dephosphorylation of the C-terminal domain (CTD) of Pol II subunit Rbp1 and Spt5, and (2) degrading the exiting nascent RNA transcript via endonuclease activity. The integrator complex is also involved in the 3'-end processing of the U7 snRNA, and also the spliceosomal snRNAs U1, U2, U4 and U5. The protein is Integrator complex subunit 15 of Drosophila melanogaster (Fruit fly).